We begin with the raw amino-acid sequence, 156 residues long: Small ribosomal subunit protein uS7 (156 aa).

Belongs to the universal ribosomal protein uS7 family. As to quaternary structure, part of the 30S ribosomal subunit. Contacts proteins S9 and S11.

Functionally, one of the primary rRNA binding proteins, it binds directly to 16S rRNA where it nucleates assembly of the head domain of the 30S subunit. Is located at the subunit interface close to the decoding center, probably blocks exit of the E-site tRNA. In Agrobacterium fabrum (strain C58 / ATCC 33970) (Agrobacterium tumefaciens (strain C58)), this protein is Small ribosomal subunit protein uS7.